A 279-amino-acid chain; its full sequence is MRKMVNIGFIKMGNLGMSQVINLIQDEIAAREGITVRVFGTGAKMGPADAADTESFKQWNADFVVMISPNAAAPGPTAAREIWKDVPCIVVSDGPTKKEAREALEQEGFGYIILPVDPLIGAKREFLDPVEMASFNSDAMKVLSSCGVVRLIQEELDRVTEQVASGKSGEDLELPHIFAKPEKCVEHAGFANPYAKAKALAALHMAEKVAQVNFPACFMLKEVEQVCLTAAAGHEIMGAAAILATQAREIEKSNDTVFRQPHAKNGTLLKKVKLYEKPE.

This sequence belongs to the MTD family.

The enzyme catalyses 5,10-methylenetetrahydromethanopterin + oxidized coenzyme F420-(gamma-L-Glu)(n) + 2 H(+) = 5,10-methenyl-5,6,7,8-tetrahydromethanopterin + reduced coenzyme F420-(gamma-L-Glu)(n). The protein operates within one-carbon metabolism; methanogenesis from CO(2); 5,10-methylene-5,6,7,8-tetrahydromethanopterin from 5,10-methenyl-5,6,7,8-tetrahydromethanopterin (coenzyme F420 route): step 1/1. Functionally, catalyzes the reversible reduction of methenyl-H(4)MPT(+) to methylene-H(4)MPT. This Methanosarcina acetivorans (strain ATCC 35395 / DSM 2834 / JCM 12185 / C2A) protein is F420-dependent methylenetetrahydromethanopterin dehydrogenase (mtd).